Here is a 60-residue protein sequence, read N- to C-terminus: Large ribosomal subunit protein uL30 (60 aa).

The protein belongs to the universal ribosomal protein uL30 family. As to quaternary structure, part of the 50S ribosomal subunit.

The sequence is that of Large ribosomal subunit protein uL30 from Xanthobacter autotrophicus (strain ATCC BAA-1158 / Py2).